Here is a 677-residue protein sequence, read N- to C-terminus: uncharacterized protein (677 aa).

Residues 1-87 (MGRHSKPDPE…PTGAEPIAAA (87 aa)) form a disordered region. The span at 17–29 (SDGHAAEQQHWED) shows a compositional bias: basic and acidic residues. Residues 51–64 (GHYSAVGGYSASGS) are compositionally biased toward low complexity. Transmembrane regions (helical) follow at residues 115–135 (VSIG…GVIL), 192–212 (VAVA…IGKW), 313–333 (EAVA…IGAV), and 474–494 (ATLA…IMLD).

Its subcellular location is the cell membrane. This is an uncharacterized protein from Mycobacterium tuberculosis (strain CDC 1551 / Oshkosh).